The sequence spans 445 residues: 3-phosphoshikimate 1-carboxyvinyltransferase (445 aa).

The tract at residues 1–20 is disordered; the sequence is MSTSAAPTPLESRASGPLSG. Residues Lys28, Ser29, and Arg33 each contribute to the 3-phosphoshikimate site. Lys28 is a phosphoenolpyruvate binding site. Phosphoenolpyruvate-binding residues include Gly101 and Arg129. Residues Ser175, Gln177, Asp328, and Lys355 each contribute to the 3-phosphoshikimate site. Gln177 serves as a coordination point for phosphoenolpyruvate. The active-site Proton acceptor is the Asp328. Positions 359 and 402 each coordinate phosphoenolpyruvate.

It belongs to the EPSP synthase family. As to quaternary structure, monomer.

It is found in the cytoplasm. The catalysed reaction is 3-phosphoshikimate + phosphoenolpyruvate = 5-O-(1-carboxyvinyl)-3-phosphoshikimate + phosphate. The protein operates within metabolic intermediate biosynthesis; chorismate biosynthesis; chorismate from D-erythrose 4-phosphate and phosphoenolpyruvate: step 6/7. Functionally, catalyzes the transfer of the enolpyruvyl moiety of phosphoenolpyruvate (PEP) to the 5-hydroxyl of shikimate-3-phosphate (S3P) to produce enolpyruvyl shikimate-3-phosphate and inorganic phosphate. The protein is 3-phosphoshikimate 1-carboxyvinyltransferase of Bradyrhizobium sp. (strain ORS 278).